The chain runs to 129 residues: Small ribosomal subunit protein uS11 (129 aa).

Belongs to the universal ribosomal protein uS11 family. As to quaternary structure, part of the 30S ribosomal subunit. Interacts with proteins S7 and S18. Binds to IF-3.

In terms of biological role, located on the platform of the 30S subunit, it bridges several disparate RNA helices of the 16S rRNA. Forms part of the Shine-Dalgarno cleft in the 70S ribosome. The chain is Small ribosomal subunit protein uS11 from Caulobacter vibrioides (strain ATCC 19089 / CIP 103742 / CB 15) (Caulobacter crescentus).